Reading from the N-terminus, the 221-residue chain is GTP cyclohydrolase III (221 aa).

It belongs to the archaeal-type GTP cyclohydrolase family.

The catalysed reaction is GTP + 3 H2O = 2-amino-5-formylamino-6-(5-phospho-D-ribosylamino)pyrimidin-4(3H)-one + 2 phosphate + 2 H(+). In terms of biological role, catalyzes the formation of 2-amino-5-formylamino-6-ribofuranosylamino-4(3H)-pyrimidinone ribonucleotide monophosphate and inorganic phosphate from GTP. Also has an independent pyrophosphate phosphohydrolase activity. In Pyrobaculum calidifontis (strain DSM 21063 / JCM 11548 / VA1), this protein is GTP cyclohydrolase III.